Consider the following 347-residue polypeptide: Aspartate-semialdehyde dehydrogenase (347 aa).

Residues 10 to 13 and 37 to 38 contribute to the NADP(+) site; these read TGMV and RS. Arginine 108 serves as a coordination point for phosphate. The active-site Acyl-thioester intermediate is cysteine 147. Glutamine 174 contributes to the substrate binding site. 177 to 178 lines the NADP(+) pocket; it reads SG. Residue glutamate 200 coordinates substrate. Lysine 203 contacts phosphate. Arginine 233 contributes to the substrate binding site. Histidine 240 (proton acceptor) is an active-site residue. The interval 276–299 is disordered; that stretch reads APEKPVVVRDEENRPQPRMDRDMD. Basic and acidic residues predominate over residues 281–299; that stretch reads VVVRDEENRPQPRMDRDMD. 327–328 provides a ligand contact to NADP(+); sequence NT.

Belongs to the aspartate-semialdehyde dehydrogenase family. Homodimer.

The catalysed reaction is L-aspartate 4-semialdehyde + phosphate + NADP(+) = 4-phospho-L-aspartate + NADPH + H(+). Its pathway is amino-acid biosynthesis; L-lysine biosynthesis via DAP pathway; (S)-tetrahydrodipicolinate from L-aspartate: step 2/4. The protein operates within amino-acid biosynthesis; L-methionine biosynthesis via de novo pathway; L-homoserine from L-aspartate: step 2/3. It functions in the pathway amino-acid biosynthesis; L-threonine biosynthesis; L-threonine from L-aspartate: step 2/5. Functionally, catalyzes the NADPH-dependent formation of L-aspartate-semialdehyde (L-ASA) by the reductive dephosphorylation of L-aspartyl-4-phosphate. The polypeptide is Aspartate-semialdehyde dehydrogenase (Methanothermobacter thermautotrophicus (strain ATCC 29096 / DSM 1053 / JCM 10044 / NBRC 100330 / Delta H) (Methanobacterium thermoautotrophicum)).